We begin with the raw amino-acid sequence, 150 residues long: Lipoprotein signal peptidase (150 aa).

3 consecutive transmembrane segments (helical) span residues leucine 5–valine 25, glutamine 59–tryptophan 79, and alanine 83–isoleucine 103. Catalysis depends on residues aspartate 113 and aspartate 129. Residues isoleucine 124–leucine 144 traverse the membrane as a helical segment.

This sequence belongs to the peptidase A8 family.

The protein resides in the cell membrane. The catalysed reaction is Release of signal peptides from bacterial membrane prolipoproteins. Hydrolyzes -Xaa-Yaa-Zaa-|-(S,diacylglyceryl)Cys-, in which Xaa is hydrophobic (preferably Leu), and Yaa (Ala or Ser) and Zaa (Gly or Ala) have small, neutral side chains.. Its pathway is protein modification; lipoprotein biosynthesis (signal peptide cleavage). Its function is as follows. This protein specifically catalyzes the removal of signal peptides from prolipoproteins. In Lactococcus lactis subsp. lactis (strain IL1403) (Streptococcus lactis), this protein is Lipoprotein signal peptidase.